A 423-amino-acid chain; its full sequence is ATP-citrate synthase alpha chain protein 2 (423 aa).

Asn-343, Thr-345, and Arg-376 together coordinate citrate.

It belongs to the succinate/malate CoA ligase beta subunit family. As to quaternary structure, heterooctamer of 4 alpha and 4 beta chains.

It is found in the cytoplasm. Its subcellular location is the cytosol. It carries out the reaction oxaloacetate + acetyl-CoA + ADP + phosphate = citrate + ATP + CoA. Its function is as follows. ATP citrate-lyase is the primary enzyme responsible for the synthesis of cytosolic acetyl-CoA, used for the elongation of fatty acids and biosynthesis of isoprenoids, flavonoids and malonated derivatives. May supply substrate to the cytosolic acetyl-CoA carboxylase, which generates the malonyl-CoA used for the synthesis of a multitude of compounds, including very long chain fatty acids and flavonoids. In contrast to all known animal ACL enzymes having a homomeric structure, plant ACLs are composed of alpha and beta chains. This chain is ATP-citrate synthase alpha chain protein 2 (ACLA-2), found in Oryza sativa subsp. japonica (Rice).